Consider the following 147-residue polypeptide: Large ribosomal subunit protein uL15 (147 aa).

A disordered region spans residues 1 to 42; the sequence is MTIKVHHLRPAPGAKTAKTRVGRGEGSKGKTAGRGTKGSKAR.

This sequence belongs to the universal ribosomal protein uL15 family. As to quaternary structure, part of the 50S ribosomal subunit.

Binds to the 23S rRNA. The sequence is that of Large ribosomal subunit protein uL15 from Salinispora arenicola (strain CNS-205).